Reading from the N-terminus, the 104-residue chain is ATP synthase subunit c (104 aa).

A run of 2 helical transmembrane segments spans residues 31–51 (SMIAAGLGLGLAALGGAIGMG) and 75–95 (MFIALAMIEAQVIYALVIALI).

It belongs to the ATPase C chain family. In terms of assembly, F-type ATPases have 2 components, F(1) - the catalytic core - and F(0) - the membrane proton channel. F(1) has five subunits: alpha(3), beta(3), gamma(1), delta(1), epsilon(1). F(0) has three main subunits: a(1), b(2) and c(10-14). The alpha and beta chains form an alternating ring which encloses part of the gamma chain. F(1) is attached to F(0) by a central stalk formed by the gamma and epsilon chains, while a peripheral stalk is formed by the delta and b chains.

It localises to the cell inner membrane. Its function is as follows. F(1)F(0) ATP synthase produces ATP from ADP in the presence of a proton or sodium gradient. F-type ATPases consist of two structural domains, F(1) containing the extramembraneous catalytic core and F(0) containing the membrane proton channel, linked together by a central stalk and a peripheral stalk. During catalysis, ATP synthesis in the catalytic domain of F(1) is coupled via a rotary mechanism of the central stalk subunits to proton translocation. Key component of the F(0) channel; it plays a direct role in translocation across the membrane. A homomeric c-ring of between 10-14 subunits forms the central stalk rotor element with the F(1) delta and epsilon subunits. In Sulfurimonas denitrificans (strain ATCC 33889 / DSM 1251) (Thiomicrospira denitrificans (strain ATCC 33889 / DSM 1251)), this protein is ATP synthase subunit c.